A 1051-amino-acid chain; its full sequence is Serine/threonine-protein kinase ULK1 (1051 aa).

One can recognise a Protein kinase domain in the interval 16-278 (FSRKDLIGHG…FDEFFHHPFL (263 aa)). ATP contacts are provided by residues 22–30 (IGHGAFAVV) and Lys46. Catalysis depends on Asp138, which acts as the Proton acceptor. The residue at position 162 (Lys162) is an N6-acetyllysine. Disordered stretches follow at residues 283 to 323 (PIKK…EMPQ), 335 to 358 (AGFLQGSRDSGGSSKDSCDTDDFV), and 394 to 554 (GLES…CRLH). The tract at residues 287-416 (SPPVPVPSYP…TCSSSPSPSG (130 aa)) is interaction with GABARAP and GABARAPL2. Low complexity-rich tracts occupy residues 295-318 (YPSSGSGSSSSSSSASHLASPPSL), 340-349 (GSRDSGGSSK), and 400-423 (RTPSPSPTCSSSPSPSGRPGPFSS). Residue Ser317 is modified to Phosphoserine; by AMPK. Phosphoserine is present on residues Ser403 and Ser450. Over residues 437–459 (QVHNYQRIEQNLQSPTQQQTARS) the composition is skewed to polar residues. The residue at position 456 (Thr456) is a Phosphothreonine. Residues Ser467, Ser477, Ser479, and Ser521 each carry the phosphoserine modification. At Ser555 the chain carries Phosphoserine; by AMPK. Position 574 is a phosphothreonine (Thr574). The residue at position 606 (Lys606) is an N6-acetyllysine. Thr635 carries the post-translational modification Phosphothreonine. Ser637 bears the Phosphoserine; by AMPK mark. At Ser638 the chain carries Phosphoserine. Disordered regions lie at residues 661–686 (PDLSEASPFHGQQLGSGLRPAEDTRG) and 727–787 (APSA…TGSS). Gly residues predominate over residues 731 to 745 (GFGGTLHPGARGGGA). Residue Ser757 is modified to Phosphoserine; by MTOR. The residue at position 774 (Ser774) is a Phosphoserine. The span at 774 to 787 (SVGSSSSLGSTGSS) shows a compositional bias: low complexity. A Phosphoserine; by AMPK modification is found at Ser777. Positions 829–1051 (PDLPEETLME…LSALLSGVYA (223 aa)) are C-terminal domain; mediates interaction with SESN2.

This sequence belongs to the protein kinase superfamily. Ser/Thr protein kinase family. APG1/unc-51/ULK1 subfamily. As to quaternary structure, interacts with GABARAP and GABARAPL2. Interacts (via C-terminus) with ATG13. Part of a complex consisting of ATG13, ATG101, ULK1 and RB1CC1. Associates with the mammalian target of rapamycin complex 1 (mTORC1) through an interaction with RPTOR; the association depends on nutrient conditions and is reduced during starvation. Interacts with FEZ1; SCOC interferes with FEZ1-binding. Interacts with TBC1D14. Interacts (phosphorylated form) with TRIM5. When phosphorylated at Ser-317, interacts with MEFV and BECN1 simultaneously. Interacts with TRIM21 and IRF3, in the presence of TRIM21. Interacts with SESN2. Interacts with SQSTM1. Interacts with C9orf72. Interacts with WDR45. Interacts with ATG13; this interaction is increased in the absence of TMEM39A. Interacts with WIPI2. Interacts with ATP2A2. Interacts with AMBRA1. Interacts with Irgm1; promoting the coassembly of ULK1 and BECN1. Autophosphorylated. Phosphorylated under nutrient-rich conditions; dephosphorylated during starvation or following treatment with rapamycin. In response to nutrient limitation, phosphorylated and activated by AMPK, leading to activate autophagy. Under nutrient sufficiency, phosphorylated by MTOR/mTOR, disrupting the interaction with AMPK and preventing activation of ULK1. In terms of processing, ubiquitinated via 'Lys-63'-linkage by a complex composed of AMBRA1 and TRAF6 following autophagy induction, promoting ULK1 stability and kinase activity. Deubiquitinated by USP20; leading to ULK1 stability and autophagy initiation. Post-translationally, acetylated by KAT5/TIP60 under autophagy induction, promoting protein kinase activity.

Its subcellular location is the cytoplasm. The protein localises to the cytosol. It is found in the preautophagosomal structure. It catalyses the reaction L-seryl-[protein] + ATP = O-phospho-L-seryl-[protein] + ADP + H(+). It carries out the reaction L-threonyl-[protein] + ATP = O-phospho-L-threonyl-[protein] + ADP + H(+). With respect to regulation, acetylation by KAT5/TIP60 stimulates the protein kinase activity. The protein kinase activity is activated by unanchored 'Lys-63'-linked polyubiquitin chains: unanchored 'Lys-63'-linked polyubiquitin chains are catalyzed by TRIM32 in an AMBRA1-dependent manner. Serine/threonine-protein kinase involved in autophagy in response to starvation. Acts upstream of phosphatidylinositol 3-kinase PIK3C3 to regulate the formation of autophagophores, the precursors of autophagosomes. Part of regulatory feedback loops in autophagy: acts both as a downstream effector and negative regulator of mammalian target of rapamycin complex 1 (mTORC1) via interaction with RPTOR. Activated via phosphorylation by AMPK and also acts as a regulator of AMPK by mediating phosphorylation of AMPK subunits PRKAA1, PRKAB2 and PRKAG1, leading to negatively regulate AMPK activity. May phosphorylate ATG13/KIAA0652 and RPTOR; however such data need additional evidences. Plays a role early in neuronal differentiation and is required for granule cell axon formation. Also phosphorylates SESN2 and SQSTM1 to regulate autophagy. Phosphorylates FLCN, promoting autophagy. Phosphorylates AMBRA1 in response to autophagy induction, releasing AMBRA1 from the cytoskeletal docking site to induce autophagosome nucleation. Phosphorylates ATG4B, leading to inhibit autophagy by decreasing both proteolytic activation and delipidation activities of ATG4B. The chain is Serine/threonine-protein kinase ULK1 (Ulk1) from Mus musculus (Mouse).